The primary structure comprises 449 residues: UDP-N-acetylmuramoylalanine--D-glutamate ligase (449 aa).

118–124 serves as a coordination point for ATP; the sequence is GSNGKTT.

This sequence belongs to the MurCDEF family.

Its subcellular location is the cytoplasm. It carries out the reaction UDP-N-acetyl-alpha-D-muramoyl-L-alanine + D-glutamate + ATP = UDP-N-acetyl-alpha-D-muramoyl-L-alanyl-D-glutamate + ADP + phosphate + H(+). It participates in cell wall biogenesis; peptidoglycan biosynthesis. Functionally, cell wall formation. Catalyzes the addition of glutamate to the nucleotide precursor UDP-N-acetylmuramoyl-L-alanine (UMA). This is UDP-N-acetylmuramoylalanine--D-glutamate ligase from Oceanobacillus iheyensis (strain DSM 14371 / CIP 107618 / JCM 11309 / KCTC 3954 / HTE831).